Consider the following 370-residue polypeptide: Protein-tyrosine sulfotransferase 1 (370 aa).

The Cytoplasmic portion of the chain corresponds to 1-8; it reads MVGKLKQN. Residues 9 to 25 form a helical; Signal-anchor for type II membrane protein membrane-spanning segment; the sequence is LLLACLVISSVTVFYLG. The Lumenal segment spans residues 26 to 370; the sequence is QHAMECHHRI…KEKPQTEQVE (345 aa). N-linked (GlcNAc...) asparagine glycosylation is present at Asn60. 79-83 contributes to the 3'-phosphoadenylyl sulfate binding site; that stretch reads RSGTT. Cys97 and Cys157 are joined by a disulfide. The active-site Proton donor/acceptor is Glu100. Residues 102 to 106 form an interaction with peptide substrate region; that stretch reads RVIPR. Arg184, Ser192, and Arg196 together coordinate 3'-phosphoadenylyl sulfate. An intrachain disulfide couples Cys226 to Cys234. Tyr239 is a 3'-phosphoadenylyl sulfate binding site. Residue Asn262 is glycosylated (N-linked (GlcNAc...) asparagine). 3'-phosphoadenylyl sulfate is bound by residues 286 to 295 and Lys301; that span reads STDQVIKPVN.

The protein belongs to the protein sulfotransferase family. Homodimer. Can also form heterodimers with TPST2. N-glycosylated. As to expression, ubiquitous. Detected in heart, brain, lung, liver, spleen, kidney, skeletal muscle and testis.

It localises to the golgi apparatus membrane. It carries out the reaction L-tyrosyl-[protein] + 3'-phosphoadenylyl sulfate = O-sulfo-L-tyrosine-[protein] + adenosine 3',5'-bisphosphate + H(+). Functionally, catalyzes the O-sulfation of tyrosine residues within acidic motifs of polypeptides, using 3'-phosphoadenylyl sulfate (PAPS) as cosubstrate. This chain is Protein-tyrosine sulfotransferase 1 (Tpst1), found in Mus musculus (Mouse).